The primary structure comprises 333 residues: Eukaryotic translation initiation factor 3 subunit I (333 aa).

4 WD repeats span residues 8–47 (GHER…RLGT), 50–91 (GHTG…ALLK), 144–183 (CNDS…VLVN), and 186–225 (EHSR…HQKT). Thr-219 carries the post-translational modification Phosphothreonine. Lys-264 carries the N6-acetyllysine modification. Residue Lys-282 forms a Glycyl lysine isopeptide (Lys-Gly) (interchain with G-Cter in ubiquitin) linkage. A WD 5 repeat occupies 283-324 (GHFGPINSVAFHPDGKSYSSGGEDGYVRIHYFDPQYFEFEFE). Tyr-308 is modified (phosphotyrosine).

It belongs to the eIF-3 subunit I family. Component of the eukaryotic translation initiation factor 3 (eIF-3) complex, which is composed of 13 subunits: EIF3A, EIF3B, EIF3C, EIF3D, EIF3E, EIF3F, EIF3G, EIF3H, EIF3I, EIF3J, EIF3K, EIF3L and EIF3M. The eIF-3 complex appears to include 3 stable modules: module A is composed of EIF3A, EIF3B, EIF3G and EIF3I; module B is composed of EIF3F, EIF3H, and EIF3M; and module C is composed of EIF3C, EIF3D, EIF3E, EIF3K and EIF3L. EIF3C of module C binds EIF3B of module A and EIF3H of module B, thereby linking the three modules. EIF3J is a labile subunit that binds to the eIF-3 complex via EIF3B. The eIF-3 complex interacts with RPS6KB1 under conditions of nutrient depletion. Mitogenic stimulation leads to binding and activation of a complex composed of MTOR and RPTOR, leading to phosphorylation and release of RPS6KB1 and binding of EIF4B to eIF-3. Post-translationally, phosphorylated by TGF-beta type II receptor.

It localises to the cytoplasm. Component of the eukaryotic translation initiation factor 3 (eIF-3) complex, which is required for several steps in the initiation of protein synthesis. The eIF-3 complex associates with the 40S ribosome and facilitates the recruitment of eIF-1, eIF-1A, eIF-2:GTP:methionyl-tRNAi and eIF-5 to form the 43S pre-initiation complex (43S PIC). The eIF-3 complex stimulates mRNA recruitment to the 43S PIC and scanning of the mRNA for AUG recognition. The eIF-3 complex is also required for disassembly and recycling of post-termination ribosomal complexes and subsequently prevents premature joining of the 40S and 60S ribosomal subunits prior to initiation. The eIF-3 complex specifically targets and initiates translation of a subset of mRNAs involved in cell proliferation, including cell cycling, differentiation and apoptosis, and uses different modes of RNA stem-loop binding to exert either translational activation or repression. The polypeptide is Eukaryotic translation initiation factor 3 subunit I (Oryctolagus cuniculus (Rabbit)).